Reading from the N-terminus, the 305-residue chain is Fumarylacetoacetate hydrolase domain-containing protein 2 homolog (305 aa).

A divalent metal cation contacts are provided by glutamate 141, glutamate 143, and aspartate 172.

Belongs to the FAH family. It depends on Ca(2+) as a cofactor. Mg(2+) serves as cofactor.

In terms of biological role, may have hydrolase activity. In Dictyostelium discoideum (Social amoeba), this protein is Fumarylacetoacetate hydrolase domain-containing protein 2 homolog (fahd2).